Here is a 180-residue protein sequence, read N- to C-terminus: Shikimate kinase (180 aa).

Residue 14 to 19 (GAGKTC) coordinates ATP. Mg(2+) is bound at residue threonine 18. Residues aspartate 36, arginine 60, and glycine 82 each coordinate substrate. Arginine 120 is an ATP binding site. Arginine 139 provides a ligand contact to substrate.

It belongs to the shikimate kinase family. In terms of assembly, monomer. Mg(2+) serves as cofactor.

The protein localises to the cytoplasm. The catalysed reaction is shikimate + ATP = 3-phosphoshikimate + ADP + H(+). It functions in the pathway metabolic intermediate biosynthesis; chorismate biosynthesis; chorismate from D-erythrose 4-phosphate and phosphoenolpyruvate: step 5/7. Its function is as follows. Catalyzes the specific phosphorylation of the 3-hydroxyl group of shikimic acid using ATP as a cosubstrate. In Stenotrophomonas maltophilia (strain R551-3), this protein is Shikimate kinase.